Reading from the N-terminus, the 217-residue chain is Imidazole glycerol phosphate synthase subunit HisH (217 aa).

A Glutamine amidotransferase type-1 domain is found at 3 to 217 (TIAIVDYGVG…LYRNFVHWNP (215 aa)). The active-site Nucleophile is the C82. Catalysis depends on residues H197 and E199.

Heterodimer of HisH and HisF.

Its subcellular location is the cytoplasm. The enzyme catalyses 5-[(5-phospho-1-deoxy-D-ribulos-1-ylimino)methylamino]-1-(5-phospho-beta-D-ribosyl)imidazole-4-carboxamide + L-glutamine = D-erythro-1-(imidazol-4-yl)glycerol 3-phosphate + 5-amino-1-(5-phospho-beta-D-ribosyl)imidazole-4-carboxamide + L-glutamate + H(+). It catalyses the reaction L-glutamine + H2O = L-glutamate + NH4(+). It functions in the pathway amino-acid biosynthesis; L-histidine biosynthesis; L-histidine from 5-phospho-alpha-D-ribose 1-diphosphate: step 5/9. Functionally, IGPS catalyzes the conversion of PRFAR and glutamine to IGP, AICAR and glutamate. The HisH subunit catalyzes the hydrolysis of glutamine to glutamate and ammonia as part of the synthesis of IGP and AICAR. The resulting ammonia molecule is channeled to the active site of HisF. This is Imidazole glycerol phosphate synthase subunit HisH from Cupriavidus pinatubonensis (strain JMP 134 / LMG 1197) (Cupriavidus necator (strain JMP 134)).